Consider the following 143-residue polypeptide: 3-dehydroquinate dehydratase (143 aa).

Residue tyrosine 21 is the Proton acceptor of the active site. The substrate site is built by asparagine 73, histidine 79, and aspartate 86. The active-site Proton donor is histidine 99. Residues 100 to 101 and arginine 110 each bind substrate; that span reads IS.

It belongs to the type-II 3-dehydroquinase family. Homododecamer.

The enzyme catalyses 3-dehydroquinate = 3-dehydroshikimate + H2O. It participates in metabolic intermediate biosynthesis; chorismate biosynthesis; chorismate from D-erythrose 4-phosphate and phosphoenolpyruvate: step 3/7. Catalyzes a trans-dehydration via an enolate intermediate. In Deinococcus radiodurans (strain ATCC 13939 / DSM 20539 / JCM 16871 / CCUG 27074 / LMG 4051 / NBRC 15346 / NCIMB 9279 / VKM B-1422 / R1), this protein is 3-dehydroquinate dehydratase.